Here is a 709-residue protein sequence, read N- to C-terminus: Protein white (709 aa).

Residues 1–35 are disordered; sequence MTINTDDQYADGESKTTISSNRRYSTSSFQDQSME. The segment covering 15–32 has biased composition (polar residues); sequence KTTISSNRRYSTSSFQDQ. The ABC transporter domain maps to 103–348; the sequence is FTRQRLVKDF…SQLGIPCPPN (246 aa). ATP-binding positions include 136–143 and 292–299; these read GSSGAGKT and GMAMKGKT. A helical membrane pass occupies residues 457 to 475; sequence LLQTAMVASLIGSIYFGQV. Asparagine 485 carries N-linked (GlcNAc...) asparagine glycosylation. A run of 4 helical transmembrane segments spans residues 487-507, 537-555, 564-585, and 598-616; these read SLFLFLTNMTFQNVFAVINVF, LPLFIAVPFVFTSITYPMI, YLTTLFIVTLVANVSTSFGYLI, and VGPPVVIPFLIFGGFFLNS. A glycan (N-linked (GlcNAc...) asparagine) is linked at asparagine 658. A helical membrane pass occupies residues 681-700; it reads LDIGCLFALIVLFRLGALFC.

It belongs to the ABC transporter superfamily. ABCG family. Eye pigment precursor importer (TC 3.A.1.204) subfamily.

The protein resides in the membrane. May be part of a membrane-spanning permease system necessary for the transport of pigment precursors into pigment cells responsible for eye color. This Anopheles albimanus (New world malaria mosquito) protein is Protein white (W).